The sequence spans 340 residues: Quinic acid degradation cluster protein x (340 aa).

Residues Glu-90, Asp-115, Leu-117, Asp-118, and Asp-262 each coordinate Mg(2+). Residue Glu-90 coordinates substrate. Substrate-binding positions include 117-120 and Asp-262; that span reads LDGT.

Belongs to the inositol monophosphatase superfamily.

Part of the qa gene cluster that mediates the catabolism of quinic acid (QA) and as such, allows the use of QA as a sole carbon source. Its function within the pathway has not been determined yet but it probably plays a regulatory role. The qa cluster encodes 3 inducible enymes (qa-2, qa-3 and qa-4) catalyzing the first three reactions in the catabolism of quinic acid to protocatechuic acid (also known as 3,4-Dihydroxybenzoic acid). In Neurospora crassa (strain ATCC 24698 / 74-OR23-1A / CBS 708.71 / DSM 1257 / FGSC 987), this protein is Quinic acid degradation cluster protein x.